The sequence spans 396 residues: MSSATSSTDRLPTAAGDAALQRLRTWPGEHRVAVGLSGGVDSSLTAALLVEAGWEVEGLTLWLMSGKGACCAEGLVDAAGICEQLGIPHHVVDTRDTFQREIVQRLVDGYREGITPLPCSQCNRSVKFGPMLDWAAEERGLPRIATGHYARIRHGGEQGRHQLLRGLDSRKDQSYFLYDLPQEVLGRIVFPLGELTKADTRGEAARHGLRTAEKPESQDLCLADHHGSMRAFLDAYLPPRQGEIVLSDGTVVGEHDGIEHFTIGQRKGLGVAWREPLHVIRLDPAMNQVVVAPRAEAGQRSCVVGAINWVSIAPLQQPLELEVQVRYRSEPVAAQLTPIPHTPEDEARQRPHRCRLQFLDDQFSITPGQAAVFYRGETVLGGGLIQRDDQAQTNRE.

ATP contacts are provided by residues 35–42 (GLSGGVDS) and Leu61. Cys122 functions as the Nucleophile in the catalytic mechanism. A disulfide bond links Cys122 and Cys221. Gly147 lines the ATP pocket. An interaction with tRNA region spans residues 171-173 (KDQ). Catalysis depends on Cys221, which acts as the Cysteine persulfide intermediate. The tract at residues 326 to 327 (RY) is interaction with tRNA.

The protein belongs to the MnmA/TRMU family.

The protein resides in the cytoplasm. The catalysed reaction is S-sulfanyl-L-cysteinyl-[protein] + uridine(34) in tRNA + AH2 + ATP = 2-thiouridine(34) in tRNA + L-cysteinyl-[protein] + A + AMP + diphosphate + H(+). Its function is as follows. Catalyzes the 2-thiolation of uridine at the wobble position (U34) of tRNA, leading to the formation of s(2)U34. The protein is tRNA-specific 2-thiouridylase MnmA of Parasynechococcus marenigrum (strain WH8102).